The primary structure comprises 293 residues: PHD finger protein 11A (293 aa).

The segment at 25–61 adopts a C2HC pre-PHD-type zinc-finger fold; the sequence is KRTCALCPEGHEWSQIYFSPSANIVAHENCLLYSSGL. The PHD-type; degenerate zinc finger occupies 91–143; sequence LKCSFCKNKGATMGYDLQSCTKNYHLSCAMEDHAILQVDEDHGTYKLFCQKHA. The interval 262-293 is disordered; the sequence is SSSTSGSLLPPEDHQVRCQESPEVQAGSGDSL.

The protein localises to the nucleus. This is PHD finger protein 11A (Phf11a) from Mus musculus (Mouse).